Here is a 102-residue protein sequence, read N- to C-terminus: MKKVLALVVAAAMGLSSAAFAAETATTPAPTATTTKAAPAKTTHHKKQHKAAPAQKAQAAKKHHKNAKTEQKAPEQKAQAAKKHAKKHSHQQPAKPAAQPAA.

Residues 1-21 form the signal peptide; it reads MKKVLALVVAAAMGLSSAAFA. Positions 22 to 41 are enriched in low complexity; it reads AETATTPAPTATTTKAAPAK. Residues 22–58 constitute a propeptide that is removed on maturation; the sequence is AETATTPAPTATTTKAAPAKTTHHKKQHKAAPAQKAQ. The disordered stretch occupies residues 22–102; the sequence is AETATTPAPT…PAKPAAQPAA (81 aa). Residues 80–90 are compositionally biased toward basic residues; the sequence is AAKKHAKKHSH. Positions 91–102 are enriched in low complexity; that stretch reads QQPAKPAAQPAA.

This sequence belongs to the Asr family. Proteolytic processing gives rise to the active protein.

The protein localises to the periplasm. In terms of biological role, required for growth and/or survival at acidic conditions. The chain is Acid shock protein from Escherichia coli O17:K52:H18 (strain UMN026 / ExPEC).